Consider the following 311-residue polypeptide: MICKNTFVDYPTTQVRKERVHTYRTLTSATPSLEFFSNENTNRLSEVQCKLTHFLSSSENSSSVRNTRTHKFKQLLHYIFFSNRSSSVLGKQNVHNSQTLGSVSFCEKHAIDINYSENVNKQLNFESHLDDQTCSKRFYFNEQSGSDRYSLKCDSDTDSSTYFGDSASETCSSASNSLYKQTDLTSLCMFNQNKIQTDWSSIDPMDNDKIVCADFEKNFNILKELLNNTKDNGIDQQIVHKEHISHLEKIWKNINEESSEDPSLLLLRLEFLLTDLQTAIRKYSDTVSTNSVNEAFFDKIKIELQAFGVLV.

It localises to the cytoplasm. It is found in the nucleus. In terms of biological role, has a role in sporulation. The polypeptide is Meiotically up-regulated gene 146 protein (mug146) (Schizosaccharomyces pombe (strain 972 / ATCC 24843) (Fission yeast)).